A 393-amino-acid chain; its full sequence is MDSISKYDNKCAIHKEHKIKMICATCKDVVCNECILLDHNGHKFGRIDVENSKEIFEEFKNNHLQNLDKQIGINNELLNESNNLFKSLEDKHTENVNTITEVFKELPKLLPIIEIDKIKQLVTLYDENKDINTNISTIVHDYSNNINLITNKYKNTINQINIDQIINDNNSYQHIEILKHCCQSRLLIKDNQNENKINELMDQYKNVNFVNNSEQVKESIKEIFEISNSLSITNVKDPKRVIAGGKECFIYKNDSIIPNGTTHLAIAPSVKTIKIGSIPTSVKYLVLLDGFNVQLKEGMLPQSITHLFVGAIKKPLLKGSIPNGVTDLSLLDGFNQKITEIPQSTVHLYLFDTPLTNFPFQNFILRTSKYKQQFAHPKVKDWNLSTWEPKIEL.

A B box-type zinc finger spans residues 6–47; that stretch reads KYDNKCAIHKEHKIKMICATCKDVVCNECILLDHNGHKFGRI. Zn(2+) contacts are provided by Cys-11, His-14, Cys-34, and His-39.

This is an uncharacterized protein from Dictyostelium discoideum (Social amoeba).